Consider the following 424-residue polypeptide: Gamma-glutamyl phosphate reductase (424 aa).

Positions 1-27 (MSVEAQSRSGAVDTQEPADLREQVHSA) are disordered.

This sequence belongs to the gamma-glutamyl phosphate reductase family.

The protein localises to the cytoplasm. The catalysed reaction is L-glutamate 5-semialdehyde + phosphate + NADP(+) = L-glutamyl 5-phosphate + NADPH + H(+). Its pathway is amino-acid biosynthesis; L-proline biosynthesis; L-glutamate 5-semialdehyde from L-glutamate: step 2/2. Catalyzes the NADPH-dependent reduction of L-glutamate 5-phosphate into L-glutamate 5-semialdehyde and phosphate. The product spontaneously undergoes cyclization to form 1-pyrroline-5-carboxylate. In Mycolicibacterium smegmatis (strain ATCC 700084 / mc(2)155) (Mycobacterium smegmatis), this protein is Gamma-glutamyl phosphate reductase.